We begin with the raw amino-acid sequence, 464 residues long: mRNA capping enzyme LEF-4 (464 aa).

An mRNA triphosphatase region spans residues 1–204 (MDYGDFVIEK…NVMCNIIADM (204 aa)). The tract at residues 205–464 (EALTDAQNIS…KHRRDRIVPN (260 aa)) is mRNA guanylyltransferase. Catalysis depends on K255, which acts as the N6-GMP-lysine intermediate.

The protein belongs to the baculoviridae LEF-4 family. In terms of assembly, interacts with LEF-8, LEF-9, and p47.

It localises to the host cytoplasm. The protein localises to the host nucleus. The catalysed reaction is a 5'-end diphospho-ribonucleoside in mRNA + GTP + H(+) = a 5'-end (5'-triphosphoguanosine)-ribonucleoside in mRNA + diphosphate. It carries out the reaction a 5'-end triphospho-ribonucleoside in mRNA + H2O = a 5'-end diphospho-ribonucleoside in mRNA + phosphate + H(+). Its function is as follows. Component of the viral DNA-dependent RNA polymerase that catalyzes two reactions involved in viral RNA cap formation: an RNA 5'-triphosphatase that hydrolyzes the gamma phosphate of triphosphate-terminated RNA and a guanylyltransferase that reacts with GTP to form a covalent protein-guanylate adduct. Therefore plays an essential role in late and very late gene expression. The polypeptide is mRNA capping enzyme LEF-4 (LEF-4) (Autographa californica nuclear polyhedrosis virus (AcMNPV)).